A 99-amino-acid polypeptide reads, in one-letter code: NADH-quinone oxidoreductase subunit K (99 aa).

3 helical membrane passes run Pro3–Leu23, Ile28–Phe48, and Phe62–Ile82.

The protein belongs to the complex I subunit 4L family. As to quaternary structure, NDH-1 is composed of 14 different subunits. Subunits NuoA, H, J, K, L, M, N constitute the membrane sector of the complex.

Its subcellular location is the cell membrane. It catalyses the reaction a quinone + NADH + 5 H(+)(in) = a quinol + NAD(+) + 4 H(+)(out). Functionally, NDH-1 shuttles electrons from NADH, via FMN and iron-sulfur (Fe-S) centers, to quinones in the respiratory chain. The immediate electron acceptor for the enzyme in this species is believed to be a menaquinone. Couples the redox reaction to proton translocation (for every two electrons transferred, four hydrogen ions are translocated across the cytoplasmic membrane), and thus conserves the redox energy in a proton gradient. This chain is NADH-quinone oxidoreductase subunit K, found in Rhodococcus erythropolis (strain PR4 / NBRC 100887).